The chain runs to 174 residues: Crossover junction endodeoxyribonuclease RuvC (174 aa).

Residues Asp-8, Glu-67, and Asp-139 contribute to the active site. Asp-8, Glu-67, and Asp-139 together coordinate Mg(2+).

It belongs to the RuvC family. As to quaternary structure, homodimer which binds Holliday junction (HJ) DNA. The HJ becomes 2-fold symmetrical on binding to RuvC with unstacked arms; it has a different conformation from HJ DNA in complex with RuvA. In the full resolvosome a probable DNA-RuvA(4)-RuvB(12)-RuvC(2) complex forms which resolves the HJ. Mg(2+) is required as a cofactor.

The protein resides in the cytoplasm. It carries out the reaction Endonucleolytic cleavage at a junction such as a reciprocal single-stranded crossover between two homologous DNA duplexes (Holliday junction).. Its function is as follows. The RuvA-RuvB-RuvC complex processes Holliday junction (HJ) DNA during genetic recombination and DNA repair. Endonuclease that resolves HJ intermediates. Cleaves cruciform DNA by making single-stranded nicks across the HJ at symmetrical positions within the homologous arms, yielding a 5'-phosphate and a 3'-hydroxyl group; requires a central core of homology in the junction. The consensus cleavage sequence is 5'-(A/T)TT(C/G)-3'. Cleavage occurs on the 3'-side of the TT dinucleotide at the point of strand exchange. HJ branch migration catalyzed by RuvA-RuvB allows RuvC to scan DNA until it finds its consensus sequence, where it cleaves and resolves the cruciform DNA. In Pseudomonas entomophila (strain L48), this protein is Crossover junction endodeoxyribonuclease RuvC.